Consider the following 556-residue polypeptide: Genetic interactor of prohibitins 3, mitochondrial (556 aa).

The transit peptide at 1–21 directs the protein to the mitochondrion; the sequence is MLNLCHALRGVRQFSCSVIVK. The 193-residue stretch at 113–305 folds into the CP-type G domain; sequence ESTLNDILNY…LFDLPGYSTS (193 aa).

This sequence belongs to the TRAFAC class YlqF/YawG GTPase family. GEP3 subfamily.

Its subcellular location is the mitochondrion. Functionally, interacts genetically with prohibitins and thus may be involved in the mitochondrial lipid metabolism. This Saccharomyces cerevisiae (strain ATCC 204508 / S288c) (Baker's yeast) protein is Genetic interactor of prohibitins 3, mitochondrial (GEP3).